Consider the following 4486-residue polypeptide: Dynein axonemal heavy chain 9 (4486 aa).

The stem stretch occupies residues 1–1831 (MRLAEERAAL…FANICDAQFL (1831 aa)). Coiled coils occupy residues 381-410 (DLLR…EFQD), 504-529 (QSTD…LGTI), 639-662 (AEGK…ETRL), 752-823 (TLLE…TWVT), and 1326-1355 (NINV…AWDA). AAA stretches follow at residues 1832–2053 (YSYE…VLVV), 2113–2334 (ALVR…TRFK), 2440–2688 (EFDP…IFQG), and 2787–3036 (NHNE…EQRY). Residues 1870–1877 (GPAGTGKT), 2151–2158 (GGAGTGKS), 2478–2485 (GTAGTGKS), and 2825–2832 (GVGGSGKQ) contribute to the ATP site. Coiled coils occupy residues 3051-3154 (YQSL…AKAE), 3285-3341 (KRQA…AEVT), and 3640-3675 (LVEN…REHY). The stalk stretch occupies residues 3051–3341 (YQSLLHRHRK…LKCQQEAEVT (291 aa)). 2 AAA regions span residues 3429–3656 (LMDD…EVEK) and 3866–4092 (LRDF…VLYN).

Belongs to the dynein heavy chain family. In terms of assembly, consists of at least two heavy chains and a number of intermediate and light chains. Interacts with ODAD1. As to expression, expressed in upper and lower respiratory airway epithelia (at protein level). Not detected in spermatozoa (at protein level).

It localises to the cytoplasm. The protein localises to the cytoskeleton. It is found in the cilium axoneme. Its function is as follows. Force generating protein required for cilia beating in respiratory epithelia. Produces force towards the minus ends of microtubules. Dynein has ATPase activity; the force-producing power stroke is thought to occur on release of ADP. This chain is Dynein axonemal heavy chain 9, found in Homo sapiens (Human).